The primary structure comprises 418 residues: Sterigmatocystin 8-O-methyltransferase (418 aa).

A propeptide spanning residues 1–41 is cleaved from the precursor; the sequence is MTLPNKAALVGLAHTLSEQVKRYLVTADETKSPEDHKLCIE. Residue 170-176 participates in substrate binding; sequence MRSAAYF. The interval 206–225 is substrate binding; that stretch reads LFDYYSTVDEVRGRRFDLGM. S-adenosyl-L-methionine contacts are provided by residues 254-255, Asp-277, 297-298, and Arg-313; these read GG and DI. His-317 acts as the Proton acceptor in catalysis.

It belongs to the class I-like SAM-binding methyltransferase superfamily. Cation-independent O-methyltransferase family. COMT subfamily.

It catalyses the reaction sterigmatocystin + S-adenosyl-L-methionine = 8-O-methylsterigmatocystin + S-adenosyl-L-homocysteine + H(+). The catalysed reaction is dihydrosterigmatocystin + S-adenosyl-L-methionine = 8-O-methyldihydrosterigmatocystin + S-adenosyl-L-homocysteine + H(+). It functions in the pathway mycotoxin biosynthesis; aflatoxin biosynthesis. In terms of biological role, involved in the conversion of sterigmatocystin to O-methylsterigmatocystin (OMST) and dihydrosterigmatocystin to dihydro-o-methylsterigmatocystin in the aflatoxin biosynthesis pathway. The polypeptide is Sterigmatocystin 8-O-methyltransferase (omtA) (Aspergillus flavus (strain ATCC 200026 / FGSC A1120 / IAM 13836 / NRRL 3357 / JCM 12722 / SRRC 167)).